The sequence spans 64 residues: Conotoxin Pn-B01121 (64 aa).

An N-terminal signal peptide occupies residues Met1–Ala22. The propeptide occupies Leu23–Asn48. Trp63 is subject to Tryptophan amide.

It belongs to the conotoxin T superfamily. In terms of processing, contains 2 disulfide bonds that can be either 'C1-C3, C2-C4' or 'C1-C4, C2-C3', since these disulfide connectivities have been observed for conotoxins with cysteine framework V (for examples, see AC P0DQQ7 and AC P81755). As to expression, expressed by the venom duct.

It is found in the secreted. In Conus pennaceus (Feathered cone), this protein is Conotoxin Pn-B01121.